A 344-amino-acid chain; its full sequence is Dihydroorotate dehydrogenase (quinone) (344 aa).

FMN contacts are provided by residues 62–66 (AGLDK) and Thr-86. Position 66 (Lys-66) interacts with substrate. A substrate-binding site is contributed by 111 to 115 (NRMGF). Positions 139 and 172 each coordinate FMN. Asn-172 serves as a coordination point for substrate. The active-site Nucleophile is the Ser-175. Asn-177 contributes to the substrate binding site. Positions 217 and 245 each coordinate FMN. 246 to 247 (NT) is a substrate binding site. Residues Gly-268, Gly-297, and 318 to 319 (YS) contribute to the FMN site.

It belongs to the dihydroorotate dehydrogenase family. Type 2 subfamily. As to quaternary structure, monomer. The cofactor is FMN.

It is found in the cell membrane. It carries out the reaction (S)-dihydroorotate + a quinone = orotate + a quinol. Its pathway is pyrimidine metabolism; UMP biosynthesis via de novo pathway; orotate from (S)-dihydroorotate (quinone route): step 1/1. Catalyzes the conversion of dihydroorotate to orotate with quinone as electron acceptor. The polypeptide is Dihydroorotate dehydrogenase (quinone) (Chromobacterium violaceum (strain ATCC 12472 / DSM 30191 / JCM 1249 / CCUG 213 / NBRC 12614 / NCIMB 9131 / NCTC 9757 / MK)).